A 542-amino-acid chain; its full sequence is MFS thioclapurine efflux transporter tcpA (542 aa).

Basic and acidic residues predominate over residues methionine 1–asparagine 10. Residues methionine 1–threonine 24 are disordered. Over residues glycine 13 to threonine 24 the composition is skewed to polar residues. Asparagine 22 carries an N-linked (GlcNAc...) asparagine glycan. The next 3 helical transmembrane spans lie at serine 32–leucine 52, glycine 75–threonine 97, and methionine 103–proline 123. A glycan (N-linked (GlcNAc...) asparagine) is linked at asparagine 124. The next 6 membrane-spanning stretches (helical) occupy residues alanine 133 to alanine 153, alanine 161 to glycine 181, cysteine 193 to phenylalanine 213, isoleucine 234 to glycine 254, isoleucine 265 to leucine 285, and isoleucine 307 to phenylalanine 327. Asparagine 332 is a glycosylation site (N-linked (GlcNAc...) asparagine). A helical membrane pass occupies residues glycine 339–isoleucine 359. A glycan (N-linked (GlcNAc...) asparagine) is linked at asparagine 361. Transmembrane regions (helical) follow at residues methionine 370–glycine 390, tryptophan 396–valine 416, valine 427–alanine 447, and valine 500–leucine 520.

Belongs to the major facilitator superfamily.

It localises to the cell membrane. Functionally, MFS efflux transporter probably involved in thioclapurine export. The protein is MFS thioclapurine efflux transporter tcpA of Claviceps purpurea (strain 20.1) (Ergot fungus).